We begin with the raw amino-acid sequence, 51 residues long: uncharacterized protein (51 aa).

A helical membrane pass occupies residues 10–29; that stretch reads LFLYHPLFLLLLYIYLVLFI.

The protein localises to the plastid. Its subcellular location is the chloroplast membrane. This is an uncharacterized protein from Anthoceros angustus (Hornwort).